A 354-amino-acid chain; its full sequence is Histidinol-phosphate aminotransferase (354 aa).

The residue at position 210 (lysine 210) is an N6-(pyridoxal phosphate)lysine.

This sequence belongs to the class-II pyridoxal-phosphate-dependent aminotransferase family. Histidinol-phosphate aminotransferase subfamily. In terms of assembly, homodimer. Requires pyridoxal 5'-phosphate as cofactor.

It carries out the reaction L-histidinol phosphate + 2-oxoglutarate = 3-(imidazol-4-yl)-2-oxopropyl phosphate + L-glutamate. It functions in the pathway amino-acid biosynthesis; L-histidine biosynthesis; L-histidine from 5-phospho-alpha-D-ribose 1-diphosphate: step 7/9. The protein is Histidinol-phosphate aminotransferase of Clostridium botulinum (strain Kyoto / Type A2).